We begin with the raw amino-acid sequence, 244 residues long: Orotidine 5'-phosphate decarboxylase (244 aa).

Substrate contacts are provided by residues Asp-10, Lys-32, 59 to 68 (DLKLHDIPNT), Thr-122, Arg-184, Gln-193, Gly-213, and Arg-214. The active-site Proton donor is Lys-61.

Belongs to the OMP decarboxylase family. Type 1 subfamily. As to quaternary structure, homodimer.

The catalysed reaction is orotidine 5'-phosphate + H(+) = UMP + CO2. The protein operates within pyrimidine metabolism; UMP biosynthesis via de novo pathway; UMP from orotate: step 2/2. Functionally, catalyzes the decarboxylation of orotidine 5'-monophosphate (OMP) to uridine 5'-monophosphate (UMP). This Geobacillus kaustophilus (strain HTA426) protein is Orotidine 5'-phosphate decarboxylase.